The primary structure comprises 263 residues: Zinc finger protein STAMENLESS 1 (263 aa).

The interval 1–51 is disordered; sequence MNSSRRQEGSPLDLNNLPDEFGKQTVESSTTTAASSAEASRVTKKKSNGGK. The segment covering 25–40 has biased composition (low complexity); the sequence is TVESSTTTAASSAEAS. A C2H2-type zinc finger spans residues 58–80; that stretch reads YECRFCSLKFCKSQALGGHMNRH.

Expressed in leaf primordia, inflorescence meristem, rachis branch meristems, floral meristem and floral organ primordia.

It is found in the nucleus. In terms of biological role, regulates floral organ identity and cell proliferation in the inner floral whorls. Probably specifies the identities of lodicule and stamen through positive regulation of MADS16 expression. May contribute to morphogenesis by suppressing OSH1 expression in the lateral organs. The chain is Zinc finger protein STAMENLESS 1 (SL1) from Oryza sativa subsp. japonica (Rice).